Here is a 153-residue protein sequence, read N- to C-terminus: Transcriptional repressor NrdR (153 aa).

A zinc finger spans residues 3–34 (CPSCSHNGTRVLDSRPVDEGRSIRRRRECESC). One can recognise an ATP-cone domain in the interval 49–139 (LIVVKKEGTR…VYRQFKDLNV (91 aa)).

It belongs to the NrdR family. It depends on Zn(2+) as a cofactor.

In terms of biological role, negatively regulates transcription of bacterial ribonucleotide reductase nrd genes and operons by binding to NrdR-boxes. The polypeptide is Transcriptional repressor NrdR (Bacillus anthracis (strain A0248)).